A 326-amino-acid polypeptide reads, in one-letter code: Light-induced protein, chloroplastic (326 aa).

A chloroplast-targeting transit peptide spans 1–63; sequence MASISSLNQI…TNPKPKFTAQ (63 aa).

It belongs to the LIPC family. Associates with the major light-harvesting antenna complex polypeptides of the PSII oxygen-evolving complex. Expressed in leaves.

Its subcellular location is the plastid. The protein resides in the chloroplast thylakoid membrane. Functionally, required for normal plant growth. May be both photoprotective and play an ancillary role in photosynthesis. May structurally stabilize thylakoids during osmotic and oxidative stress. This is Light-induced protein, chloroplastic from Solanum tuberosum (Potato).